A 928-amino-acid chain; its full sequence is Zinc metalloproteinase nas-39 (928 aa).

The signal sequence occupies residues 1–30 (MRFSANIAIIVNIIFLFIVVEFVLPTFIRS). Positions 48–247 (AATAKKERIW…RQTKKLYKCA (200 aa)) constitute a Peptidase M12A domain. N-linked (GlcNAc...) asparagine glycosylation is found at Asn-69 and Asn-87. 4 disulfide bridges follow: Cys-90–Cys-246, Cys-111–Cys-133, Cys-113–Cys-114, and Cys-249–Cys-268. His-141 serves as a coordination point for Zn(2+). Residue Glu-142 is part of the active site. Residues His-145 and His-151 each coordinate Zn(2+). 2 CUB domains span residues 249–359 (CGGT…YAIC) and 360–476 (GGPI…FTKE). Residue Asn-283 is glycosylated (N-linked (GlcNAc...) asparagine). Cystine bridges form between Cys-359–Cys-385, Cys-412–Cys-439, Cys-480–Cys-491, Cys-487–Cys-500, Cys-502–Cys-515, and Cys-519–Cys-545. In terms of domain architecture, EGF-like 1; calcium-binding spans 477–516 (LNECATDKNICHHYCVNTVGGFKCACRVGYSLSSNGFSCD). Positions 519–625 (CGGYLKASNG…DGFFANFIAD (107 aa)) constitute a CUB 3 domain. N-linked (GlcNAc...) asparagine glycans are attached at residues Asn-527 and Asn-560. 8 disulfides stabilise this stretch: Cys-573/Cys-587, Cys-629/Cys-640, Cys-636/Cys-649, Cys-651/Cys-664, Cys-669/Cys-695, Cys-722/Cys-744, Cys-782/Cys-812, and Cys-840/Cys-863. The 40-residue stretch at 626–665 (FDECQNDNAGCEHTCQNRLGSYVCTCNPGYILAEDKHNCK) folds into the EGF-like 2; calcium-binding domain. CUB domains lie at 669–781 (CFFE…YTSL) and 782–900 (CGGR…YREA). Asn-694 carries N-linked (GlcNAc...) asparagine glycosylation. The segment at 895-928 (AEYREAPRSSSTKRTFVSKTRHSPLEEPIHDRNE) is disordered. Residues 902–912 (RSSSTKRTFVS) are compositionally biased toward polar residues. Positions 917–928 (SPLEEPIHDRNE) are enriched in basic and acidic residues.

Zn(2+) is required as a cofactor. In terms of tissue distribution, expressed in pharyngeal, vulva and body wall muscles, intestine and several neurons.

Its subcellular location is the secreted. In terms of biological role, metalloprotease. In Caenorhabditis elegans, this protein is Zinc metalloproteinase nas-39.